The sequence spans 540 residues: Beta-glucosidase 1B (540 aa).

Substrate contacts are provided by Gln-25, His-128, and Asn-174. Residue Glu-175 is the Proton donor of the active site. Tyr-316 provides a ligand contact to substrate. The active-site Nucleophile is the Glu-380. Substrate is bound by residues Trp-430 and 437-438; that span reads EW. The span at 481 to 492 shows a compositional bias: low complexity; the sequence is PAAETKKAATPS. Residues 481-524 are disordered; that stretch reads PAAETKKAATPSPLKPHGAISNGVSKKSSATKEPKSASRKKGRK.

Belongs to the glycosyl hydrolase 1 family.

The enzyme catalyses Hydrolysis of terminal, non-reducing beta-D-glucosyl residues with release of beta-D-glucose.. Its function is as follows. Plays an important role in cellulose degradation. Shows hydrolytic activity against several glycosidic compounds. This is Beta-glucosidase 1B from Phanerodontia chrysosporium (White-rot fungus).